Here is a 124-residue protein sequence, read N- to C-terminus: MARIVGVELPDNKRIVFALPRIYGIGKSTAEDICEALGIDPMQKLGELTPEQINTLQDYITAHYKVEGDLRREVAMNIKRLMDIKCYRGIRHQRGLPVRGQRTRHNARTRKGPRKTVGAKKGKR.

The segment at 95–124 is disordered; that stretch reads GLPVRGQRTRHNARTRKGPRKTVGAKKGKR. Residues 101–124 are compositionally biased toward basic residues; the sequence is QRTRHNARTRKGPRKTVGAKKGKR.

The protein belongs to the universal ribosomal protein uS13 family. As to quaternary structure, part of the 30S ribosomal subunit. Forms a loose heterodimer with protein S19. Forms two bridges to the 50S subunit in the 70S ribosome.

In terms of biological role, located at the top of the head of the 30S subunit, it contacts several helices of the 16S rRNA. In the 70S ribosome it contacts the 23S rRNA (bridge B1a) and protein L5 of the 50S subunit (bridge B1b), connecting the 2 subunits; these bridges are implicated in subunit movement. Contacts the tRNAs in the A and P-sites. This is Small ribosomal subunit protein uS13 from Coprothermobacter proteolyticus (strain ATCC 35245 / DSM 5265 / OCM 4 / BT).